The following is a 744-amino-acid chain: CCR4-NOT transcription complex subunit 10 (744 aa).

The span at 1-16 (MAADKPADQGAEKHEG) shows a compositional bias: basic and acidic residues. Positions 1-25 (MAADKPADQGAEKHEGTGQSSGITD) are disordered. An N-acetylalanine modification is found at alanine 2. Positions 74–107 (KSNQTTTDNLRQTLNQLKNQVHSAVEEMDGLDDV) form a coiled coil. Residues 183-199 (NNNKNGKNETGNNNNKD) show a composition bias toward low complexity. 3 disordered regions span residues 183–204 (NNNKNGKNETGNNNNKDGSNHK), 477–521 (QDPK…PPSS), and 602–634 (VSLGISSNEQDQGSDKGENEAMESSGKRAPQCY). A compositionally biased stretch (polar residues) spans 484 to 495 (GAKNSNQLGGNT). Residues 496 to 506 (ESSESSETCSS) show a composition bias toward low complexity. Residues 602 to 612 (VSLGISSNEQD) are compositionally biased toward polar residues.

It belongs to the CNOT10 family. In terms of assembly, component of the CCR4-NOT complex; distinct complexes seem to exist that differ in the participation of probably mutually exclusive catalytic subunits. CNOT10 and CNOT11 form a subcomplex docked to the CNOT1 scaffold.

It is found in the cytoplasm. The protein localises to the nucleus. In terms of biological role, component of the CCR4-NOT complex which is one of the major cellular mRNA deadenylases and is linked to various cellular processes including bulk mRNA degradation, miRNA-mediated repression, translational repression during translational initiation and general transcription regulation. Additional complex functions may be a consequence of its influence on mRNA expression. Is not required for association of CNOT7 to the CCR4-NOT complex. In Homo sapiens (Human), this protein is CCR4-NOT transcription complex subunit 10 (CNOT10).